The primary structure comprises 239 residues: Increased recombination centers protein 22-2 (239 aa).

An N-terminal signal peptide occupies residues methionine 1 to glycine 19. The Lumenal portion of the chain corresponds to tyrosine 20 to leucine 161. The chain crosses the membrane as a helical span at residues isoleucine 162–isoleucine 182. Residues tryptophan 183–asparagine 239 are Cytoplasmic-facing. A compositionally biased stretch (low complexity) spans alanine 201–serine 213. A disordered region spans residues alanine 201–threonine 222.

Belongs to the IRC22 family.

It localises to the endoplasmic reticulum membrane. Is probably involved in a pathway contributing to genomic integrity. The sequence is that of Increased recombination centers protein 22-2 (IRC22-2) from Candida albicans (strain WO-1) (Yeast).